Reading from the N-terminus, the 258-residue chain is MKEILITNDDGYESEGLKKLIKMLTKEFKAKITIVAPASEKSACSHSITLTKPLRFVKVGKRFYKLDDGTPADCVYLALHALYKKRLPDLVISGINKGANVGEDITYSGTCAGAMEAVLQGIPAIALSQFYKKSEKELDYKNALQITKKIIQNIFDKGFPLEKKEFLNINFPAKSKIKGIKICKAGKRVYNFEAYSNVNPRGVEYYWLAAANLDFEDEKNSDIALLKKGYATITPIMLDLTAYERMKKVKKWLKANDE.

A divalent metal cation is bound by residues Asp-9, Asp-10, Ser-42, and Asn-96.

This sequence belongs to the SurE nucleotidase family. A divalent metal cation is required as a cofactor.

The protein localises to the cytoplasm. It carries out the reaction a ribonucleoside 5'-phosphate + H2O = a ribonucleoside + phosphate. Nucleotidase that shows phosphatase activity on nucleoside 5'-monophosphates. This Campylobacter jejuni subsp. jejuni serotype O:23/36 (strain 81-176) protein is 5'-nucleotidase SurE.